Consider the following 491-residue polypeptide: Cobyric acid synthase (491 aa).

The GATase cobBQ-type domain occupies 246–432 (RKLIACPILP…VHGLLADAEL (187 aa)). The active-site Nucleophile is Cys328. Residue His424 is part of the active site.

Belongs to the CobB/CobQ family. CobQ subfamily.

Its pathway is cofactor biosynthesis; adenosylcobalamin biosynthesis. Functionally, catalyzes amidations at positions B, D, E, and G on adenosylcobyrinic A,C-diamide. NH(2) groups are provided by glutamine, and one molecule of ATP is hydrogenolyzed for each amidation. The polypeptide is Cobyric acid synthase (Novosphingobium aromaticivorans (strain ATCC 700278 / DSM 12444 / CCUG 56034 / CIP 105152 / NBRC 16084 / F199)).